Consider the following 197-residue polypeptide: Ribonuclease HII (197 aa).

One can recognise an RNase H type-2 domain in the interval 3-192 (QLIAGVDEVG…VQLSLMQRGG (190 aa)). D9, E10, and D101 together coordinate a divalent metal cation.

The protein belongs to the RNase HII family. It depends on Mn(2+) as a cofactor. The cofactor is Mg(2+).

Its subcellular location is the cytoplasm. The enzyme catalyses Endonucleolytic cleavage to 5'-phosphomonoester.. In terms of biological role, endonuclease that specifically degrades the RNA of RNA-DNA hybrids. The sequence is that of Ribonuclease HII from Pseudoalteromonas atlantica (strain T6c / ATCC BAA-1087).